The sequence spans 310 residues: NADH-cytochrome b5 reductase 1 (310 aa).

The chain crosses the membrane as a helical span at residues 32–52 (EWLPYAVALAAILSGGKVFSN). The FAD-binding FR-type domain occupies 61 to 166 (TEFQNFELKE…RGPKGAMVYT (106 aa)). FAD is bound by residues 146-161 (AGLR…GPKG) and 172-209 (KIGM…QVDL).

It belongs to the flavoprotein pyridine nucleotide cytochrome reductase family. In terms of assembly, monomer. Component of the 2-(3-amino-3-carboxypropyl)histidine synthase complex composed of DPH1, DPH2, DPH3 and a NADH-dependent reductase, predominantly CBR1. FAD serves as cofactor.

Its subcellular location is the mitochondrion outer membrane. It catalyses the reaction 2 Fe(III)-[cytochrome b5] + NADH = 2 Fe(II)-[cytochrome b5] + NAD(+) + H(+). The catalysed reaction is 2 Fe(3+)-[Dph3] + NADH = 2 Fe(2+)-[Dph3] + NAD(+) + H(+). It participates in protein modification; peptidyl-diphthamide biosynthesis. NADH-dependent reductase for DPH3 and cytochrome b5. Required for the first step of diphthamide biosynthesis, a post-translational modification of histidine which occurs in elongation factor 2. DPH1 and DPH2 transfer a 3-amino-3-carboxypropyl (ACP) group from S-adenosyl-L-methionine (SAM) to a histidine residue, the reaction is assisted by a reduction system comprising DPH3 and a NADH-dependent reductase, predominantly CBR1. By reducing DPH3, also involved in the formation of the tRNA wobble base modification mcm5s 2U (5-methoxycarbonylmethyl-2-thiouridine), mediated by the elongator complex. The cytochrome b5/NADH cytochrome b5 reductase electron transfer system supports the catalytic activity of several sterol biosynthetic enzymes. The chain is NADH-cytochrome b5 reductase 1 (CBR1) from Ajellomyces capsulatus (strain NAm1 / WU24) (Darling's disease fungus).